A 723-amino-acid polypeptide reads, in one-letter code: Zinc finger protein 750 (723 aa).

The CCHC-type zinc finger occupies 25-51 (YKCFQCPFTCNEKSHLFNHMKYGLCKN). Zn(2+) is bound by residues Cys27, Cys30, His43, and Cys49. Disordered stretches follow at residues 64 to 91 (KCPK…SKSV), 132 to 153 (LHRA…QPAL), 359 to 427 (ASSP…SQTC), 466 to 630 (PAQA…SEEQ), and 650 to 723 (RVGD…ARVS). Polar residues predominate over residues 67–91 (KSNSLDPKQTNQPDATAKPASSKSV). The segment covering 360-369 (SSPSRLNPSD) has biased composition (polar residues). Basic and acidic residues predominate over residues 370 to 397 (PNRKHVEFESPIPEAKDSSKAGQRDTEG). Residues 470 to 482 (AETTAESPVSLNV) are compositionally biased toward polar residues. Over residues 500 to 509 (AAPSSPDDSS) the composition is skewed to low complexity. Residues 530 to 545 (PTYQGSPQAETASFSE) show a composition bias toward polar residues. 2 stretches are compositionally biased toward low complexity: residues 563 to 582 (APRP…AAVP) and 606 to 616 (GDGAPPTGPGE). The span at 666-678 (DTPTLSSMESQEA) shows a compositional bias: polar residues.

Expressed in the skin, prostate, lung, placenta and thymus, and at low level in T-cells. Not expressed in peripheral blood leukocytes, pancreas and brain. Clearly expressed in primary keratinocytes but not in fibroblasts.

It localises to the nucleus. Its function is as follows. Transcription factor involved in epidermis differentiation. Required for terminal epidermal differentiation: acts downstream of p63/TP63 and activates expression of late epidermal differentiation genes. Specifically binds to the promoter of KLF4 and promotes its expression. The chain is Zinc finger protein 750 (ZNF750) from Homo sapiens (Human).